Reading from the N-terminus, the 291-residue chain is Acetylglutamate kinase (291 aa).

Substrate-binding positions include 64 to 65, R86, and N190; that span reads GG.

The protein belongs to the acetylglutamate kinase family. ArgB subfamily.

It localises to the cytoplasm. The catalysed reaction is N-acetyl-L-glutamate + ATP = N-acetyl-L-glutamyl 5-phosphate + ADP. Its pathway is amino-acid biosynthesis; L-arginine biosynthesis; N(2)-acetyl-L-ornithine from L-glutamate: step 2/4. In terms of biological role, catalyzes the ATP-dependent phosphorylation of N-acetyl-L-glutamate. The sequence is that of Acetylglutamate kinase from Leptospira borgpetersenii serovar Hardjo-bovis (strain L550).